Reading from the N-terminus, the 447-residue chain is Probable glycine dehydrogenase (decarboxylating) subunit 1 (447 aa).

This sequence belongs to the GcvP family. N-terminal subunit subfamily. As to quaternary structure, the glycine cleavage system is composed of four proteins: P, T, L and H. In this organism, the P 'protein' is a heterodimer of two subunits.

It carries out the reaction N(6)-[(R)-lipoyl]-L-lysyl-[glycine-cleavage complex H protein] + glycine + H(+) = N(6)-[(R)-S(8)-aminomethyldihydrolipoyl]-L-lysyl-[glycine-cleavage complex H protein] + CO2. The glycine cleavage system catalyzes the degradation of glycine. The P protein binds the alpha-amino group of glycine through its pyridoxal phosphate cofactor; CO(2) is released and the remaining methylamine moiety is then transferred to the lipoamide cofactor of the H protein. This Beijerinckia indica subsp. indica (strain ATCC 9039 / DSM 1715 / NCIMB 8712) protein is Probable glycine dehydrogenase (decarboxylating) subunit 1.